The sequence spans 146 residues: Putative pre-16S rRNA nuclease (146 aa).

The protein belongs to the YqgF nuclease family.

It is found in the cytoplasm. Could be a nuclease involved in processing of the 5'-end of pre-16S rRNA. The polypeptide is Putative pre-16S rRNA nuclease (Methylobacillus flagellatus (strain ATCC 51484 / DSM 6875 / VKM B-1610 / KT)).